The primary structure comprises 491 residues: UDP-N-acetylmuramate--L-alanine ligase (491 aa).

Residue 126-132 (GTHGKTT) participates in ATP binding.

The protein belongs to the MurCDEF family.

The protein localises to the cytoplasm. The catalysed reaction is UDP-N-acetyl-alpha-D-muramate + L-alanine + ATP = UDP-N-acetyl-alpha-D-muramoyl-L-alanine + ADP + phosphate + H(+). The protein operates within cell wall biogenesis; peptidoglycan biosynthesis. Its function is as follows. Cell wall formation. The chain is UDP-N-acetylmuramate--L-alanine ligase from Salmonella paratyphi C (strain RKS4594).